A 165-amino-acid polypeptide reads, in one-letter code: Nucleotide-binding protein Syncc9902_1708 (165 aa).

Belongs to the YajQ family.

Functionally, nucleotide-binding protein. In Synechococcus sp. (strain CC9902), this protein is Nucleotide-binding protein Syncc9902_1708.